The sequence spans 535 residues: 2-isopropylmalate synthase (535 aa).

The Pyruvate carboxyltransferase domain maps to 13–274; it reads VLIFDTTLRD…YFNPFLGRPP (262 aa). Mn(2+)-binding residues include Asp-22, His-213, His-215, and Asn-249. The tract at residues 414 to 535 is regulatory domain; it reads QLEFVQVSCG…LEQRALHPQA (122 aa).

The protein belongs to the alpha-IPM synthase/homocitrate synthase family. LeuA type 1 subfamily. As to quaternary structure, homodimer. The cofactor is Mn(2+).

The protein localises to the cytoplasm. The catalysed reaction is 3-methyl-2-oxobutanoate + acetyl-CoA + H2O = (2S)-2-isopropylmalate + CoA + H(+). The protein operates within amino-acid biosynthesis; L-leucine biosynthesis; L-leucine from 3-methyl-2-oxobutanoate: step 1/4. In terms of biological role, catalyzes the condensation of the acetyl group of acetyl-CoA with 3-methyl-2-oxobutanoate (2-ketoisovalerate) to form 3-carboxy-3-hydroxy-4-methylpentanoate (2-isopropylmalate). This chain is 2-isopropylmalate synthase, found in Thermosynechococcus vestitus (strain NIES-2133 / IAM M-273 / BP-1).